Here is a 383-residue protein sequence, read N- to C-terminus: MLRIGLTGGMGAGKSTVARILADLGAVIVDSDVIAREVVAPGTEGLAALVAAFGSDILAADGSLDRPALAAKAFADDAARAKLNSITHPLVGKRTAELIGAAPAEAIVVQDIPLLVENGLAPLMNLVLVVDVPAETRIRRLVEFRGVAEADARARIAAQATDEQRRAVADVLLDNSGPEGAVEQVVRELWERRLVPFERNLRAATPAAPGTSELRVDAERQAQAQRLVARLAVAGGAAAARIEHVGPTAVPDLPARDLLELQIVVADAAAATGLRDALGAAGFPAMSGEGSGALRAAAWHGSADPGRPAVVAVRVEGTPEQRFASALGERLRGDAALREEYLDVARKAEAEAAGSVGAAAGAAFDAVLHPWLAEVAERLLGTV.

Residues 3 to 201 (RIGLTGGMGA…RRLVPFERNL (199 aa)) enclose the DPCK domain. 11-16 (GAGKST) lines the ATP pocket. The tract at residues 196–383 (PFERNLRAAT…EVAERLLGTV (188 aa)) is UPF0157.

It in the N-terminal section; belongs to the CoaE family. This sequence in the C-terminal section; belongs to the UPF0157 (GrpB) family.

The protein resides in the cytoplasm. The enzyme catalyses 3'-dephospho-CoA + ATP = ADP + CoA + H(+). Its pathway is cofactor biosynthesis; coenzyme A biosynthesis; CoA from (R)-pantothenate: step 5/5. Functionally, catalyzes the phosphorylation of the 3'-hydroxyl group of dephosphocoenzyme A to form coenzyme A. This chain is Dephospho-CoA kinase, found in Nocardia farcinica (strain IFM 10152).